Consider the following 392-residue polypeptide: ATP phosphoribosyltransferase regulatory subunit (392 aa).

It belongs to the class-II aminoacyl-tRNA synthetase family. HisZ subfamily. Heteromultimer composed of HisG and HisZ subunits.

Its subcellular location is the cytoplasm. The protein operates within amino-acid biosynthesis; L-histidine biosynthesis; L-histidine from 5-phospho-alpha-D-ribose 1-diphosphate: step 1/9. In terms of biological role, required for the first step of histidine biosynthesis. May allow the feedback regulation of ATP phosphoribosyltransferase activity by histidine. In Prochlorococcus marinus (strain MIT 9211), this protein is ATP phosphoribosyltransferase regulatory subunit.